Reading from the N-terminus, the 192-residue chain is Fe/S biogenesis protein NfuA (192 aa).

[4Fe-4S] cluster is bound by residues cysteine 149 and cysteine 152.

It belongs to the NfuA family. Homodimer. Requires [4Fe-4S] cluster as cofactor.

In terms of biological role, involved in iron-sulfur cluster biogenesis. Binds a 4Fe-4S cluster, can transfer this cluster to apoproteins, and thereby intervenes in the maturation of Fe/S proteins. Could also act as a scaffold/chaperone for damaged Fe/S proteins. This is Fe/S biogenesis protein NfuA from Shewanella sediminis (strain HAW-EB3).